A 454-amino-acid polypeptide reads, in one-letter code: MSTTDTIVAQATPPGRGGVGILRISGRGAKDVAQALLGKLPKPRYADYLPFRDAAGATLDQGIALWFPGPNSFTGEDVLELQGHGGPVILDLLLKRVLALPGMRIARPGEFSERAFLNDKLDLAQAEAIADLIDASSEQAARSAMNSLQGAFSTRIHQLVEALTHLRIYVEAAIDFPDEEIDFLSDGKIEAQLNGVMADLDSVRAEARQGSLLREGMKVVIAGRPNAGKSSLLNALAGREAAIVTDIAGTTRDVLREHIHIDGMPLHIIDTAGLREASDEVERIGIERAWNEIEQADRVLFMVDGTTTAATEPAEIWPEFMARLPHRLPITVVRNKADITGETLGMTEVNGHSLIRLSARTGEGIDLLRDHLKQSMGFTSNMEGGFLARRRHLQALEQAAQHLVEGKEQLVSAYAGELLAEELRLAQQALSEITGEFTSDDLLGRIFSSFCIGK.

(6S)-5-formyl-5,6,7,8-tetrahydrofolate-binding residues include Arg23, Glu80, and Lys120. Residues 216 to 377 (GMKVVIAGRP…LRDHLKQSMG (162 aa)) enclose the TrmE-type G domain. Asn226 is a binding site for K(+). GTP-binding positions include 226-231 (NAGKSS), 245-251 (TDIAGTT), 270-273 (DTAG), 335-338 (NKAD), and 358-360 (SAR). Ser230 is a binding site for Mg(2+). Positions 245, 247, and 250 each coordinate K(+). A Mg(2+)-binding site is contributed by Thr251. Lys454 contributes to the (6S)-5-formyl-5,6,7,8-tetrahydrofolate binding site.

Belongs to the TRAFAC class TrmE-Era-EngA-EngB-Septin-like GTPase superfamily. TrmE GTPase family. As to quaternary structure, homodimer. Heterotetramer of two MnmE and two MnmG subunits. Requires K(+) as cofactor.

It is found in the cytoplasm. Exhibits a very high intrinsic GTPase hydrolysis rate. Involved in the addition of a carboxymethylaminomethyl (cmnm) group at the wobble position (U34) of certain tRNAs, forming tRNA-cmnm(5)s(2)U34. The chain is tRNA modification GTPase MnmE from Serratia proteamaculans (strain 568).